Consider the following 1479-residue polypeptide: C-type mannose receptor 2 (1479 aa).

The signal sequence occupies residues 1 to 30 (MVPIRPALAPWPRHLLRCVLLLGGLRLGHP). Over 31-1413 (ADSAAALLEP…SAALPESPVA (1383 aa)) the chain is Extracellular. In terms of domain architecture, Ricin B-type lectin spans 37–190 (LLEPDVFLIF…SHGKPCTIPF (154 aa)). Cys92 and Cys111 form a disulfide bridge. Asn101 and Asn139 each carry an N-linked (GlcNAc...) asparagine glycan. A Fibronectin type-II domain is found at 181 to 229 (SHGKPCTIPFKYDNQWFHGCTSTGREDGHLWCATTQDYGKDERWGFCPI). Cystine bridges form between Cys186–Cys212, Cys200–Cys227, Cys265–Cys358, and Cys334–Cys350. Positions 243–359 (LTDSCYQFNF…CSIALPYVCK (117 aa)) constitute a C-type lectin 1 domain. N-linked (GlcNAc...) asparagine glycosylation occurs at Asn363. 7 C-type lectin domains span residues 388 to 504 (FQGH…SICK), 527 to 643 (HSPS…RYIC), 677 to 808 (KLRH…WICK), 831 to 950 (FQEA…YICK), 978 to 1106 (FLNK…GFIC), 1131 to 1242 (YLNH…GAVC), and 1271 to 1391 (FREH…GVVC). 7 disulfides stabilise this stretch: Cys409–Cys503, Cys480–Cys495, Cys617–Cys634, Cys703–Cys807, Cys784–Cys799, Cys852–Cys949, and Cys926–Cys941. Asn1028 is a glycosylation site (N-linked (GlcNAc...) asparagine). A disulfide bond links Cys1077 and Cys1097. Lys1141 is covalently cross-linked (Glycyl lysine isopeptide (Lys-Gly) (interchain with G-Cter in SUMO1)). A disulfide bridge connects residues Cys1219 and Cys1233. Asn1348 is a glycosylation site (N-linked (GlcNAc...) asparagine). Cys1367 and Cys1382 form a disulfide bridge. Residues 1414 to 1434 (LVVVLTAVLLLLALMTAALIL) traverse the membrane as a helical segment. Residues 1435-1479 (YRRRQSAERGSFEGARYSRSSHSGPAEATEKNILVSDMEMNEQQE) lie on the Cytoplasmic side of the membrane. Residues 1446 to 1479 (FEGARYSRSSHSGPAEATEKNILVSDMEMNEQQE) are disordered.

Interacts directly with PLAUR/UPAR and PLAU/pro-UPA to form a tri-molecular complex. Interacts with collagen V and with C-terminal region of type I collagen/COL1A1. Phosphorylated. Highly expressed in heart, lung and kidney, but little or no expression in brain, thymus or adult liver. Expressed at highly endothelialized sites such as those in choroid plexus and kidney glomerulai as well as in chondrocytes in cartilaginous regions of the embryo.

It localises to the membrane. May play a role as endocytotic lectin receptor displaying calcium-dependent lectin activity. Internalizes glycosylated ligands from the extracellular space for release in an endosomal compartment via clathrin-mediated endocytosis. May be involved in plasminogen activation system controlling the extracellular level of PLAUR/PLAU, and thus may regulate protease activity at the cell surface. May contribute to cellular uptake, remodeling and degradation of extracellular collagen matrices. May participate in remodeling of extracellular matrix cooperating with the matrix metalloproteinases (MMPs). The chain is C-type mannose receptor 2 (Mrc2) from Mus musculus (Mouse).